We begin with the raw amino-acid sequence, 196 residues long: Probable malonic semialdehyde reductase RutE (196 aa).

The protein belongs to the nitroreductase family. HadB/RutE subfamily. The cofactor is FMN.

The catalysed reaction is 3-hydroxypropanoate + NADP(+) = 3-oxopropanoate + NADPH + H(+). In terms of biological role, may reduce toxic product malonic semialdehyde to 3-hydroxypropionic acid, which is excreted. This chain is Probable malonic semialdehyde reductase RutE, found in Cronobacter sakazakii (strain ATCC BAA-894) (Enterobacter sakazakii).